Reading from the N-terminus, the 296-residue chain is NADH-cytochrome b5 reductase 2 (296 aa).

The helical transmembrane segment at 12–29 (LPIALGVGAASIATAIIL) threads the bilayer. The region spanning 47 to 151 (NEWIDLPIIK…KGPITKWEWK (105 aa)) is the FAD-binding FR-type domain. 154–189 (SYDSITLLGAGTGINPLYQLVHHIAENPEDNTKIHL) contributes to the FAD binding site.

This sequence belongs to the flavoprotein pyridine nucleotide cytochrome reductase family. The cofactor is FAD.

Its subcellular location is the mitochondrion outer membrane. It carries out the reaction 2 Fe(III)-[cytochrome b5] + NADH = 2 Fe(II)-[cytochrome b5] + NAD(+) + H(+). In terms of biological role, may mediate the reduction of outer membrane cytochrome b5. The protein is NADH-cytochrome b5 reductase 2 (MCR1) of Kluyveromyces lactis (strain ATCC 8585 / CBS 2359 / DSM 70799 / NBRC 1267 / NRRL Y-1140 / WM37) (Yeast).